We begin with the raw amino-acid sequence, 112 residues long: Putative pterin-4-alpha-carbinolamine dehydratase (112 aa).

This sequence belongs to the pterin-4-alpha-carbinolamine dehydratase family.

It catalyses the reaction (4aS,6R)-4a-hydroxy-L-erythro-5,6,7,8-tetrahydrobiopterin = (6R)-L-erythro-6,7-dihydrobiopterin + H2O. The polypeptide is Putative pterin-4-alpha-carbinolamine dehydratase (Shewanella denitrificans (strain OS217 / ATCC BAA-1090 / DSM 15013)).